The primary structure comprises 312 residues: Probable deoxyhypusine synthase (312 aa).

Lysine 285 (nucleophile) is an active-site residue.

The protein belongs to the deoxyhypusine synthase family. NAD(+) serves as cofactor.

The catalysed reaction is [eIF5A protein]-L-lysine + spermidine = [eIF5A protein]-deoxyhypusine + propane-1,3-diamine. It functions in the pathway protein modification; eIF5A hypusination. Its function is as follows. Catalyzes the NAD-dependent oxidative cleavage of spermidine and the subsequent transfer of the butylamine moiety of spermidine to the epsilon-amino group of a specific lysine residue of the eIF-5A precursor protein to form the intermediate deoxyhypusine residue. This chain is Probable deoxyhypusine synthase (dys), found in Saccharolobus solfataricus (strain ATCC 35092 / DSM 1617 / JCM 11322 / P2) (Sulfolobus solfataricus).